An 837-amino-acid polypeptide reads, in one-letter code: Striatin-interacting protein 1 (837 aa).

The residue at position 1 (Met1) is an N-acetylmethionine. 2 disordered regions span residues Met1–Asp67 and Ala333–Pro423. Pro residues predominate over residues Pro18 to Ala35. Residues Pro36–Gly46 show a composition bias toward low complexity. The segment covering Lys47–Glu60 has biased composition (basic and acidic residues). 3 positions are modified to phosphoserine: Ser59, Ser335, and Ser339. Residues Ala333–Ser343 are compositionally biased toward low complexity. A compositionally biased stretch (basic and acidic residues) spans Lys356–Asp377. Residues Ser378–Leu391 are compositionally biased toward acidic residues. Ser788 bears the Phosphoserine mark. The tract at residues Asp796–Gln837 is required for STRIPAK core complex formation.

The protein belongs to the STRIP family. Part of the core of STRIPAK complexes composed of PP2A catalytic and scaffolding subunits, the striatins (PP2A regulatory subunits), the striatin-associated proteins MOB4, STRIP1 and STRIP2, PDCD10 and members of the STE20 kinases, such as STK24 and STK26. The STRIPAK complex can be extended by adapter proteins such as SLMAP:SIKE1, CTTNBP2 or CTTNBP2NL. Interacts with CDC42BPB. Interacts with CTTNBP2NL.

The protein resides in the cytoplasm. Plays a role in the regulation of cell morphology and cytoskeletal organization. Required in the cortical actin filament dynamics and cell shape. Part of the striatin-interacting phosphatase and kinase (STRIPAK) complexes. STRIPAK complexes have critical roles in protein (de)phosphorylation and are regulators of multiple signaling pathways including Hippo, MAPK, nuclear receptor and cytoskeleton remodeling. Different types of STRIPAK complexes are involved in a variety of biological processes such as cell growth, differentiation, apoptosis, metabolism and immune regulation. The polypeptide is Striatin-interacting protein 1 (STRIP1) (Pongo abelii (Sumatran orangutan)).